The sequence spans 111 residues: Disintegrin DS-AS (111 aa).

The signal sequence occupies residues 1–20 (MIQVLLVIICLAVFPYQGSC). Residues 21–47 (IILESGNVNDYEIVYPKKLIVLPTGAM) constitute a propeptide that is removed on maturation. One can recognise a Disintegrin domain in the interval 47 to 111 (MNSPHPCCDP…PDCPRNPYKD (65 aa)). 4 disulfides stabilise this stretch: C53/C76, C67/C73, C72/C97, and C85/C104. The short motif at 89–91 (RGD) is the Cell attachment site element.

As to quaternary structure, heterodimer; disulfide-linked.

The protein resides in the secreted. Its function is as follows. Inhibits ADP-induced platelet aggregation in human platelet-rich plasma (IC(50) is 8 uM). This is Disintegrin DS-AS from Atheris squamigera (Variable bush viper).